Reading from the N-terminus, the 120-residue chain is Small ribosomal subunit protein uS13 (120 aa).

The interval 93–120 (RKGLPVRGQTTKNNARTRKGKKKTVGSK) is disordered. Basic residues predominate over residues 107 to 120 (ARTRKGKKKTVGSK).

Belongs to the universal ribosomal protein uS13 family. Part of the 30S ribosomal subunit. Forms a loose heterodimer with protein S19. Forms two bridges to the 50S subunit in the 70S ribosome.

In terms of biological role, located at the top of the head of the 30S subunit, it contacts several helices of the 16S rRNA. In the 70S ribosome it contacts the 23S rRNA (bridge B1a) and protein L5 of the 50S subunit (bridge B1b), connecting the 2 subunits; these bridges are implicated in subunit movement. Contacts the tRNAs in the A and P-sites. This is Small ribosomal subunit protein uS13 from Helicobacter acinonychis (strain Sheeba).